A 259-amino-acid polypeptide reads, in one-letter code: MTRDQTATFGRHALRVAGSGLLVAGVVALGLLGWQWRANVTVDRVAVTGAQHAPPDTLRRLARVGRGTAMRAVAPMLVADRVARHPWVKEATAETQWMQGALTISVTERTPAALAVDAQGRPAYYLDRSGHAMPLPDSAGYDVPLVRGLEAEAPWTQPDTAQTPSSLRRVLRALPEAGVADLVAEIEMQPDDAIQLTTTPIGPHDALPVHLGSGNVSRKLRTLRAFARQVLASSPDEPIERIDLRFDGQVVTRTRPLDG.

Residues 1 to 15 are Cytoplasmic-facing; the sequence is MTRDQTATFGRHALR. Residues 16–36 form a helical membrane-spanning segment; that stretch reads VAGSGLLVAGVVALGLLGWQW. Residues 37 to 259 are Periplasmic-facing; it reads RANVTVDRVA…VVTRTRPLDG (223 aa). The region spanning 40–109 is the POTRA domain; sequence VTVDRVAVTG…GALTISVTER (70 aa).

The protein belongs to the FtsQ/DivIB family. FtsQ subfamily.

Its subcellular location is the cell inner membrane. Functionally, essential cell division protein. The sequence is that of Cell division protein FtsQ from Salinibacter ruber (strain DSM 13855 / M31).